A 568-amino-acid chain; its full sequence is MWLTWMEYALVLLLMTALAVPMGQWLARCFTSEHHAWIERLSFRALGVNPAERMGWQRYGLALLLSNGAMLLLGYALLRAQGWLPLNALGNAAQTPDLAFNTAASFVTNTNWQAYSGESSLSNATQMVAITFMMFAGAITGVVAAAGFIRGLARSSASDLGNYWVDYVRVLWRVMLPLSFVVALVYVWQGVPQALDGQVWATTLEGARQQILLGPVASLESIKHIGTNGGGFFGMNAAHPFENPTPLTNAIHILGMLLIPSAMTYAFGSMLLRRRQGWVLFGACLVMFVGFLALVFTAEQAGNPLLTAAGADQQISATQPGGNMEGKELRFGIADTALFVATTTAATTGSVNAMHDSLTPLGGLVPLAQMMINCVFGGDGVGLINLLQYAILTVFLAGMMIGRTPEFLGKKIEAREIKLVMLAVMAHPISVLGFTALAAVWPDTLASLANRGPHGFSEVLYAYASGTANNGSAFAGLNANTPFFNTTIGLAMLAGRYLTLLPMLALAGSLAAKPTVPAGPGTFPTATPLFMGLLVFVVVVVGGLTFLPSLALGPVVEQLQMLSGQVYP.

10 helical membrane-spanning segments follow: residues 1 to 21, 60 to 80, 129 to 149, 174 to 194, 251 to 271, 278 to 298, 381 to 401, 420 to 440, 488 to 508, and 528 to 548; these read MWLT…LAVP, GLAL…LLRA, AITF…AGFI, VMLP…VPQA, IHIL…GSML, WVLF…VFTA, VGLI…GMMI, VMLA…LAAV, IGLA…ALAG, and PLFM…TFLP.

The protein belongs to the KdpA family. The system is composed of three essential subunits: KdpA, KdpB and KdpC.

The protein localises to the cell inner membrane. In terms of biological role, part of the high-affinity ATP-driven potassium transport (or Kdp) system, which catalyzes the hydrolysis of ATP coupled with the electrogenic transport of potassium into the cytoplasm. This subunit binds the periplasmic potassium ions and delivers the ions to the membrane domain of KdpB through an intramembrane tunnel. The polypeptide is Potassium-transporting ATPase potassium-binding subunit (Delftia acidovorans (strain DSM 14801 / SPH-1)).